We begin with the raw amino-acid sequence, 626 residues long: Phosphomethylpyrimidine synthase (626 aa).

Substrate-binding positions include N237, M266, Y295, H331, S351–G353, D392–R395, and E431. H435 contacts Zn(2+). Residue Y458 coordinates substrate. H499 contacts Zn(2+). [4Fe-4S] cluster contacts are provided by C579, C582, and C587.

Belongs to the ThiC family. Homodimer. [4Fe-4S] cluster is required as a cofactor.

It carries out the reaction 5-amino-1-(5-phospho-beta-D-ribosyl)imidazole + S-adenosyl-L-methionine = 4-amino-2-methyl-5-(phosphooxymethyl)pyrimidine + CO + 5'-deoxyadenosine + formate + L-methionine + 3 H(+). It participates in cofactor biosynthesis; thiamine diphosphate biosynthesis. In terms of biological role, catalyzes the synthesis of the hydroxymethylpyrimidine phosphate (HMP-P) moiety of thiamine from aminoimidazole ribotide (AIR) in a radical S-adenosyl-L-methionine (SAM)-dependent reaction. This Cupriavidus necator (strain ATCC 17699 / DSM 428 / KCTC 22496 / NCIMB 10442 / H16 / Stanier 337) (Ralstonia eutropha) protein is Phosphomethylpyrimidine synthase.